The chain runs to 360 residues: Galactoside alpha-(1,2)-fucosyltransferase 1 (360 aa).

Over 1 to 8 the chain is Cytoplasmic; sequence MWAPGHHH. A helical; Signal-anchor for type II membrane protein transmembrane segment spans residues 9 to 27; sequence LCLIFLLTCVFACVFFLLI. Over 28-360 the chain is Lumenal; that stretch reads HQNLFHSGLD…GINADLSPLQ (333 aa). N-linked (GlcNAc...) asparagine glycans are attached at residues Asn65, Asn301, and Asn327.

The protein belongs to the glycosyltransferase 11 family. Expressed in brain, intestine and kidney.

The protein resides in the golgi apparatus. It localises to the golgi stack membrane. It catalyses the reaction a ganglioside GM1 + GDP-beta-L-fucose = a ganglioside Fuc-GM1 + GDP + H(+). The catalysed reaction is a beta-D-galactosyl-(1-&gt;4)-N-acetyl-beta-D-glucosaminyl derivative + GDP-beta-L-fucose = an alpha-L-Fuc-(1-&gt;2)-beta-D-Gal-(1-&gt;4)-beta-D-GlcNAc derivative + GDP + H(+). The enzyme catalyses a ganglioside GA1 + GDP-beta-L-fucose = a ganglioside Fuc-GA1 + GDP + H(+). It carries out the reaction a beta-D-Gal-(1-&gt;3)-beta-D-GlcNAc-(1-&gt;3)-beta-D-Gal-(1-&gt;4)-beta-D-Glc-(1&lt;-&gt;1')-Cer(d18:1(4E)) + GDP-beta-L-fucose = alpha-L-fucosyl-(1-&gt;2)- beta-D-galactosyl-(1-&gt;3)-N-acetyl-beta-D-glucosaminyl-(1-&gt;3)-beta-D-galactosyl-(1-&gt;4)-beta-D-glucosyl-(1&lt;-&gt;1')-N-acylsphing-4-enine + GDP + H(+). It catalyses the reaction a neolactoside nLc4Cer(d18:1(4E)) + GDP-beta-L-fucose = a neolactoside IV(2)-alpha-Fuc-nLc4Cer(d18:1(4E)) + GDP + H(+). The catalysed reaction is beta-D-galactosyl-(1-&gt;3)-N-acetyl-D-galactosamine + GDP-beta-L-fucose = alpha-L-fucosyl-(1-&gt;2)-beta-D-galactosyl-(1-&gt;3)-N-acetyl-D-galactosamine + GDP + H(+). It participates in protein modification; protein glycosylation. In terms of biological role, catalyzes the transfer of L-fucose, from a guanosine diphosphate-beta-L-fucose, to the terminal galactose residue of glycoconjugates through an alpha(1,2) linkage leading to H antigen synthesis that is an intermediate substrate in the synthesis of ABO blood group antigens. H antigen is essential for maturation of the glomerular layer of the main olfactory bulb, in cell migration and early cell-cell contacts during tumor associated angiogenesis. Preferentially fucosylates soluble lactose and to a lesser extent, fucosylates glycolipids gangliosides GA1 and GM1a. In Bos taurus (Bovine), this protein is Galactoside alpha-(1,2)-fucosyltransferase 1.